The chain runs to 621 residues: Methionine--tRNA ligase (621 aa).

The short motif at 11–21 is the 'HIGH' region element; it reads PYANGPRHIGH. Residues Cys143, Cys146, Cys156, and Cys159 each contribute to the Zn(2+) site. The 'KMSKS' region signature appears at 347–351; the sequence is KFSSS. An ATP-binding site is contributed by Ser350.

This sequence belongs to the class-I aminoacyl-tRNA synthetase family. MetG type 1 subfamily. As to quaternary structure, monomer. Requires Zn(2+) as cofactor.

It is found in the cytoplasm. It catalyses the reaction tRNA(Met) + L-methionine + ATP = L-methionyl-tRNA(Met) + AMP + diphosphate. Its function is as follows. Is required not only for elongation of protein synthesis but also for the initiation of all mRNA translation through initiator tRNA(fMet) aminoacylation. The polypeptide is Methionine--tRNA ligase (Bifidobacterium longum subsp. infantis (strain ATCC 15697 / DSM 20088 / JCM 1222 / NCTC 11817 / S12)).